We begin with the raw amino-acid sequence, 878 residues long: Coatomer subunit gamma (878 aa).

6 HEAT repeats span residues R64–D101, R287–A324, V326–S359, S360–R396, T399–D434, and A471–A508.

It belongs to the COPG family. As to quaternary structure, oligomeric complex that consists of at least the alpha, beta, beta', gamma, delta, epsilon and zeta subunits.

It localises to the cytoplasm. The protein resides in the golgi apparatus membrane. The protein localises to the cytoplasmic vesicle. Its subcellular location is the COPI-coated vesicle membrane. It is found in the endoplasmic reticulum. Functionally, the coatomer is a cytosolic protein complex that binds to dilysine motifs and reversibly associates with Golgi non-clathrin-coated vesicles, which further mediate biosynthetic protein transport from the ER, via the Golgi up to the trans Golgi network. Coatomer complex is required for budding from Golgi membranes, and is essential for the retrograde Golgi-to-ER transport of dilysine-tagged proteins. Required for limiting lipid storage in lipid droplets. Involved in the expansion of luminal extracellular matrices and apical membrane during tubulogenesis. Required in the tracheal epithelium for luminal protein secretion and diametric tube growth. In salivary glands, required for deposition of O-glycans and luminal extracellular matrix assembly. Required for epidermal morphogenesis and cuticle development. The chain is Coatomer subunit gamma from Drosophila pseudoobscura pseudoobscura (Fruit fly).